Consider the following 147-residue polypeptide: Large ribosomal subunit protein uL15 (147 aa).

Polar residues predominate over residues 1–10; it reads MYLNTLSPNS. The segment at 1 to 48 is disordered; that stretch reads MYLNTLSPNSKSHKKSKRVGRGIGSGFGKTSGRGHKGQKSRSGCKIRR. Positions 11-20 are enriched in basic residues; the sequence is KSHKKSKRVG. Positions 21-31 are enriched in gly residues; that stretch reads RGIGSGFGKTS. The span at 32-47 shows a compositional bias: basic residues; sequence GRGHKGQKSRSGCKIR.

Belongs to the universal ribosomal protein uL15 family. Part of the 50S ribosomal subunit.

Binds to the 23S rRNA. This Buchnera aphidicola subsp. Baizongia pistaciae (strain Bp) protein is Large ribosomal subunit protein uL15.